A 498-amino-acid chain; its full sequence is ATP synthase subunit beta, chloroplastic (498 aa).

172–179 (GGAGVGKT) is an ATP binding site.

It belongs to the ATPase alpha/beta chains family. In terms of assembly, F-type ATPases have 2 components, CF(1) - the catalytic core - and CF(0) - the membrane proton channel. CF(1) has five subunits: alpha(3), beta(3), gamma(1), delta(1), epsilon(1). CF(0) has four main subunits: a(1), b(1), b'(1) and c(9-12).

It localises to the plastid. The protein localises to the chloroplast thylakoid membrane. It catalyses the reaction ATP + H2O + 4 H(+)(in) = ADP + phosphate + 5 H(+)(out). In terms of biological role, produces ATP from ADP in the presence of a proton gradient across the membrane. The catalytic sites are hosted primarily by the beta subunits. The polypeptide is ATP synthase subunit beta, chloroplastic (Magnolia tripetala (Umbrella-tree)).